The following is a 173-amino-acid chain: Crossover junction endodeoxyribonuclease RuvC (173 aa).

Residues Asp-8, Glu-67, and Asp-139 contribute to the active site. Residues Asp-8, Glu-67, and Asp-139 each coordinate Mg(2+).

The protein belongs to the RuvC family. As to quaternary structure, homodimer which binds Holliday junction (HJ) DNA. The HJ becomes 2-fold symmetrical on binding to RuvC with unstacked arms; it has a different conformation from HJ DNA in complex with RuvA. In the full resolvosome a probable DNA-RuvA(4)-RuvB(12)-RuvC(2) complex forms which resolves the HJ. Mg(2+) serves as cofactor.

It is found in the cytoplasm. It catalyses the reaction Endonucleolytic cleavage at a junction such as a reciprocal single-stranded crossover between two homologous DNA duplexes (Holliday junction).. The RuvA-RuvB-RuvC complex processes Holliday junction (HJ) DNA during genetic recombination and DNA repair. Endonuclease that resolves HJ intermediates. Cleaves cruciform DNA by making single-stranded nicks across the HJ at symmetrical positions within the homologous arms, yielding a 5'-phosphate and a 3'-hydroxyl group; requires a central core of homology in the junction. The consensus cleavage sequence is 5'-(A/T)TT(C/G)-3'. Cleavage occurs on the 3'-side of the TT dinucleotide at the point of strand exchange. HJ branch migration catalyzed by RuvA-RuvB allows RuvC to scan DNA until it finds its consensus sequence, where it cleaves and resolves the cruciform DNA. This chain is Crossover junction endodeoxyribonuclease RuvC, found in Vibrio vulnificus (strain YJ016).